A 537-amino-acid polypeptide reads, in one-letter code: Cytoplasmic dynein 2 intermediate chain 2 (537 aa).

Serine 15 is modified (phosphoserine). The tract at residues 80 to 93 (RTHADAQVQTEAPE) is DYNLL2 binding. A DYNLRB1 binding region spans residues 107-132 (LRLEAFLRRVEAMVIRELNNNWQSHA). WD repeat units lie at residues 216-256 (EVPS…DPLL), 265-309 (THTD…QLRL), 391-431 (PHGG…PLTS), 434-474 (LSHK…QKPT), and 481-521 (QDGS…TEQG).

This sequence belongs to the dynein light intermediate chain family. In terms of assembly, the cytoplasmic dynein 2 complex consists of two catalytic heavy chains (HCs) and a number of non-catalytic subunits presented by intermediate chains (ICs), light intermediate chains (LICs) and light chains (LCs). Among them, a heavy chain (DYNC2H1), two intermediate chains (DYNC2I2 and DYNC2I1), a light intermediate chain (DYNC2LI1), and a light chain (DYNLT2B) are unique to the cytoplasmic dynein complex 2, but a subset of the light chains are also shared by dynein-1 and dynein-2 complexes. Interacts with DYNC2I1; their C-terminal domains each bind a copy of the heavy chain, and their extended N-terminal regions are held together by an array of light chain dimers. Interacts with DYNLL2; this interaction is essential for dynein-2-mediated retrograde trafficking of ciliary proteins. Interacts with DYNLRB1; this interaction is essential for dynein-2-mediated retrograde trafficking of ciliary proteins. Interacts (via the WD domains) with MAP3K7 and TAB3. Interacts (via WD domains) with TAB2 (via C-terminus). Interacts (via WD domains) with TRAF6 (via TRAF-type domains). As to expression, expressed in brain, thymus, heart, lung, liver, spleen, kidney, testis and intestine.

Its subcellular location is the cytoplasm. The protein resides in the cytoskeleton. It is found in the cilium basal body. It localises to the cilium axoneme. The protein localises to the cell projection. Its subcellular location is the cilium. The protein resides in the microtubule organizing center. It is found in the centrosome. It localises to the filopodium. In terms of biological role, acts as one of several non-catalytic accessory components of the cytoplasmic dynein 2 complex (dynein-2 complex), a motor protein complex that drives the movement of cargos along microtubules within cilia and flagella in concert with the intraflagellar transport (IFT) system. DYNC2I2 plays a major role in retrograde ciliary protein trafficking and in ciliogenesis. Required also to maintain a functional transition zone. Acts as a negative regulator of the Toll-like and IL-1R receptor signaling pathways. Inhibits the MAP3K7-induced NF-kappa-B activation pathway. Inhibits MAP3K7 phosphorylation at 'Thr-184' and 'Thr-187' upon Il-1 beta stimulation. The chain is Cytoplasmic dynein 2 intermediate chain 2 (Dync2i2) from Mus musculus (Mouse).